The sequence spans 235 residues: 2-C-methyl-D-erythritol 4-phosphate cytidylyltransferase (235 aa).

This sequence belongs to the IspD/TarI cytidylyltransferase family. IspD subfamily.

The catalysed reaction is 2-C-methyl-D-erythritol 4-phosphate + CTP + H(+) = 4-CDP-2-C-methyl-D-erythritol + diphosphate. It functions in the pathway isoprenoid biosynthesis; isopentenyl diphosphate biosynthesis via DXP pathway; isopentenyl diphosphate from 1-deoxy-D-xylulose 5-phosphate: step 2/6. Its function is as follows. Catalyzes the formation of 4-diphosphocytidyl-2-C-methyl-D-erythritol from CTP and 2-C-methyl-D-erythritol 4-phosphate (MEP). The polypeptide is 2-C-methyl-D-erythritol 4-phosphate cytidylyltransferase (Pseudomonas entomophila (strain L48)).